A 562-amino-acid chain; its full sequence is uncharacterized protein (562 aa).

This is an uncharacterized protein from Saccharolobus islandicus (Sulfolobus islandicus).